A 395-amino-acid chain; its full sequence is Chaperone protein DnaJ (395 aa).

Residues 4–69 enclose the J domain; it reads DYYEVLGLSR…DKRRRYDQFG (66 aa). A CR-type zinc finger spans residues 151–232; sequence GVEKTLKIKK…CYGEGIKQGE (82 aa). The Zn(2+) site is built by cysteine 164, cysteine 167, cysteine 180, cysteine 183, cysteine 206, cysteine 209, cysteine 220, and cysteine 223. CXXCXGXG motif repeat units lie at residues 164–171, 180–187, 206–213, and 220–227; these read CTECNGTG, CPTCHGSG, CPTCGGEG, and CVSCYGEG.

It belongs to the DnaJ family. In terms of assembly, homodimer. Zn(2+) serves as cofactor.

It is found in the cytoplasm. Its function is as follows. Participates actively in the response to hyperosmotic and heat shock by preventing the aggregation of stress-denatured proteins and by disaggregating proteins, also in an autonomous, DnaK-independent fashion. Unfolded proteins bind initially to DnaJ; upon interaction with the DnaJ-bound protein, DnaK hydrolyzes its bound ATP, resulting in the formation of a stable complex. GrpE releases ADP from DnaK; ATP binding to DnaK triggers the release of the substrate protein, thus completing the reaction cycle. Several rounds of ATP-dependent interactions between DnaJ, DnaK and GrpE are required for fully efficient folding. Also involved, together with DnaK and GrpE, in the DNA replication of plasmids through activation of initiation proteins. In Chlorobium phaeobacteroides (strain DSM 266 / SMG 266 / 2430), this protein is Chaperone protein DnaJ.